Reading from the N-terminus, the 353-residue chain is Photosystem II protein D1 (353 aa).

At threonine 2 the chain carries N-acetylthreonine. Threonine 2 carries the post-translational modification Phosphothreonine. Helical transmembrane passes span 29 to 46 (YIGWFGVIMIPTLLTATS), 118 to 133 (HFFLGICCYMGREWEL), and 142 to 156 (WIAVAYSAPVAAATA). Residue histidine 118 participates in chlorophyll a binding. Tyrosine 126 contributes to the pheophytin a binding site. Positions 170 and 189 each coordinate [CaMn4O5] cluster. A helical membrane pass occupies residues 197–218 (FHMLGVAGVFGGSLFSAMHGSL). Histidine 198 is a binding site for chlorophyll a. A quinone-binding positions include histidine 215 and 264 to 265 (SF). Histidine 215 is a binding site for Fe cation. Histidine 272 lines the Fe cation pocket. The helical transmembrane segment at 274–288 (FLAAWPVVGIWFTAL) threads the bilayer. The [CaMn4O5] cluster site is built by histidine 332, glutamate 333, aspartate 342, and alanine 344. Positions 345–353 (SVEAPSVNA) are excised as a propeptide.

Belongs to the reaction center PufL/M/PsbA/D family. In terms of assembly, PSII is composed of 1 copy each of membrane proteins PsbA, PsbB, PsbC, PsbD, PsbE, PsbF, PsbH, PsbI, PsbJ, PsbK, PsbL, PsbM, PsbT, PsbX, PsbY, PsbZ, Psb30/Ycf12, at least 3 peripheral proteins of the oxygen-evolving complex and a large number of cofactors. It forms dimeric complexes. Requires The D1/D2 heterodimer binds P680, chlorophylls that are the primary electron donor of PSII, and subsequent electron acceptors. It shares a non-heme iron and each subunit binds pheophytin, quinone, additional chlorophylls, carotenoids and lipids. D1 provides most of the ligands for the Mn4-Ca-O5 cluster of the oxygen-evolving complex (OEC). There is also a Cl(-1) ion associated with D1 and D2, which is required for oxygen evolution. The PSII complex binds additional chlorophylls, carotenoids and specific lipids. as cofactor. Post-translationally, the 9 C-terminal residues are removed, probably by CTPA (AC O04073); processing is essential to allow assembly of the oxygen-evolving complex and thus photosynthetic growth. In terms of processing, tyr-161 forms a radical intermediate that is referred to as redox-active TyrZ, YZ or Y-Z.

The protein localises to the plastid. It is found in the chloroplast thylakoid membrane. The enzyme catalyses 2 a plastoquinone + 4 hnu + 2 H2O = 2 a plastoquinol + O2. In terms of biological role, photosystem II (PSII) is a light-driven water:plastoquinone oxidoreductase that uses light energy to abstract electrons from H(2)O, generating O(2) and a proton gradient subsequently used for ATP formation. It consists of a core antenna complex that captures photons, and an electron transfer chain that converts photonic excitation into a charge separation. The D1/D2 (PsbA/PsbD) reaction center heterodimer binds P680, the primary electron donor of PSII as well as several subsequent electron acceptors. The chain is Photosystem II protein D1 from Tetradesmus obliquus (Green alga).